A 336-amino-acid polypeptide reads, in one-letter code: Fructose-1,6-bisphosphatase class 1 (336 aa).

Mg(2+)-binding residues include glutamate 92, aspartate 115, leucine 117, and aspartate 118. Residues 118–121, asparagine 211, tyrosine 244, 262–264, and lysine 274 each bind substrate; these read DGSS and YLY. Glutamate 280 contributes to the Mg(2+) binding site.

This sequence belongs to the FBPase class 1 family. In terms of assembly, homotetramer. Requires Mg(2+) as cofactor.

It is found in the cytoplasm. The catalysed reaction is beta-D-fructose 1,6-bisphosphate + H2O = beta-D-fructose 6-phosphate + phosphate. The protein operates within carbohydrate biosynthesis; gluconeogenesis. In Aliivibrio fischeri (strain ATCC 700601 / ES114) (Vibrio fischeri), this protein is Fructose-1,6-bisphosphatase class 1.